Reading from the N-terminus, the 588-residue chain is MYRWLTKVLGTILRLCERPAPGARALLKRRRSSSSLFSTAVDTDEIPAKRPRLDCFIHQVKNSLYNAASLFGFPFQLTTKPMVSSACNGTRNVAPSGEVFSNSPSCELTTSGSCSSMLKLGNKSPNGISDYPKIRVTVARDQPRRVLPSFGFTLKSEGYNRRPSGRRHSKSNPESSLPWKPQEQGVTEMISEEGGKGARRPHCTVEEGVQKDEREKYLKLLERLKEGAHGSTFPPAVSHHSSQRTQMDTLKTKGWMEEQNHGVRTTHLVPKQYRVVETRGPLCSVRSEKRYSKGKADTEKVVGLRFEKDGTRGHQLEPDLSEEVSARLRLGSGSNGLLRRKISVLEAKEKNFPSKEKDRRTEDLFELTEDMEKEISNALGHGPPDEILSSAFKLRITRGDIQTLKNYHWLNDEVINFYMNLLVERSKKQGYPALHALSTFFYPKLKSGGYQAVKRWTKGVNLFDQELVLVPIHRKVHWSLVVMDLRKKCLKYLDSMGQKGHRICEILLQYLQDESKTKRNTDLNLLEWTHYSMKPHEIPQQLNGSDCGMFTCKYADYISRDKPITFTQHQMPLFRKKMVWEILHQQLL.

The Nuclear localization signal motif lies at 28–31 (KRRR). Ser-32 carries the post-translational modification Phosphoserine. Residues 47 to 52 (PAKRPR) carry the Nuclear localization signal motif. The axin-binding stretch occupies residues 72–381 (GFPFQLTTKP…EKEISNALGH (310 aa)). The tract at residues 157–184 (EGYNRRPSGRRHSKSNPESSLPWKPQEQ) is disordered. Residues 316-331 (LEPDLSEEVSARLRLG) carry the Nuclear export signal motif. A phosphoserine mark is found at Ser-332 and Ser-343. The interval 394 to 558 (LRITRGDIQT…MFTCKYADYI (165 aa)) is protease. Residues His-477 and Asp-494 contribute to the active site. The active-site Nucleophile is Cys-547.

It belongs to the peptidase C48 family. In terms of assembly, binds to SUMO2 and SUMO3. Interacts with the C-terminal domain of NUP153 via its N-terminus. Interacts with MTA1. Binds to AXIN1. Polyubiquitinated; which leads to proteasomal degradation. As to expression, ubiquitous. Highly expressed in brain, lung and testis.

Its subcellular location is the nucleus. The protein resides in the nuclear pore complex. It is found in the nucleus membrane. The protein localises to the cytoplasm. Protease that catalyzes two essential functions in the SUMO pathway. The first is the hydrolysis of an alpha-linked peptide bond at the C-terminal end of the small ubiquitin-like modifier (SUMO) propeptides, SUMO1, SUMO2 and SUMO3 leading to the mature form of the proteins. The second is the deconjugation of SUMO1, SUMO2 and SUMO3 from targeted proteins, by cleaving an epsilon-linked peptide bond between the C-terminal glycine of the mature SUMO and the lysine epsilon-amino group of the target protein. May down-regulate CTNNB1 levels and thereby modulate the Wnt pathway. Deconjugates SUMO2 from MTA1. Plays a dynamic role in adipogenesis by desumoylating and promoting the stabilization of CEBPB. Acts as a regulator of the cGAS-STING pathway by catalyzing desumoylation of CGAS and STING1 during the late phase of viral infection. The sequence is that of Sentrin-specific protease 2 (Senp2) from Rattus norvegicus (Rat).